The chain runs to 311 residues: Malate dehydrogenase (311 aa).

NAD(+) contacts are provided by residues 7-13 and Asp-34; that span reads GAAGGIG. Substrate-binding residues include Arg-81 and Arg-87. NAD(+) is bound by residues Asn-94 and 117–119; that span reads ITN. Substrate contacts are provided by Asn-119 and Arg-153. His-177 acts as the Proton acceptor in catalysis. Residue Met-227 participates in NAD(+) binding.

Belongs to the LDH/MDH superfamily. MDH type 1 family. As to quaternary structure, homodimer.

It catalyses the reaction (S)-malate + NAD(+) = oxaloacetate + NADH + H(+). Catalyzes the reversible oxidation of malate to oxaloacetate. The polypeptide is Malate dehydrogenase (Aeromonas salmonicida (strain A449)).